The following is an 858-amino-acid chain: Protein 4.1 (858 aa).

Residues 1-125 (MTTEKSLAAE…KEIELGNSLD (125 aa)) form a disordered region. Ser14 is modified (phosphoserine). The segment covering 31 to 50 (QQETQLEEASQAAAAEGSDQ) has biased composition (low complexity). Residue Thr62 is modified to Phosphothreonine. Positions 63-77 (PTHEDLTKNKERTSE) are enriched in basic and acidic residues. Positions 78–89 (SRGLSRLLSSFL) are enriched in low complexity. Phosphoserine is present on residues Ser86, Ser87, Ser97, Ser106, Ser123, Ser151, Ser153, and Ser154. Residues 103–119 (EVESEKEKGEGGQKEIE) show a composition bias toward basic and acidic residues. The segment at 155–208 (IETQPAQEEHREDPDSETKEGEGIEECSGTEVKEDPESRAEREPEASQKPVRRH) is disordered. Composition is skewed to basic and acidic residues over residues 161 to 176 (QEEHREDPDSETKEGE) and 185 to 200 (EVKEDPESRAEREPEA). The residue at position 192 (Ser192) is a Phosphoserine. The FERM domain occupies 211-492 (MHCKVSLLDD…EHHTFFRLTS (282 aa)). Residue Tyr223 is modified to Phosphotyrosine. At Thr379 the chain carries Phosphothreonine. The tract at residues 495-608 (TIPKSKFLAL…PAEPEPTEAW (114 aa)) is hydrophilic. The disordered stretch occupies residues 518–636 (TRQASALIDR…TQKLAGKGED (119 aa)). Residues Ser522, Ser541, Ser543, and Ser556 each carry the phosphoserine modification. Composition is skewed to basic and acidic residues over residues 581–595 (TPKEAVKVEEKRGEE) and 606–615 (EAWKVEKTHT). The spectrin--actin-binding stretch occupies residues 609-707 (KVEKTHTEVT…WDKRLSTHSP (99 aa)). Positions 616–629 (EVTVPTSNGDQTQK) are enriched in polar residues. Residue Tyr654 is modified to Phosphotyrosine. Phosphoserine occurs at positions 658, 668, 678, 703, and 706. The interval 710 to 858 (TLNINGQVPT…VHQETEISEE (149 aa)) is C-terminal (CTD). Residues Thr730 and Thr853 each carry the phosphothreonine modification.

In terms of assembly, binds with a high affinity to glycophorin and with lower affinity to band III protein. Associates with the nuclear mitotic apparatus. Binds calmodulin, CPAP and DLG1. Also found to associate with contractile apparatus and tight junctions. Interacts with NUMA1; this interaction is negatively regulated by CDK1 during metaphase and promotes anaphase-specific localization of NUMA1 in symmetrically dividing cells. Interacts with ATP2B1; regulates small intestinal calcium absorption through regulation of membrane expression of ATP2B1. Post-translationally, O-glycosylated; contains N-acetylglucosamine side chains in the C-terminal domain. Phosphorylated at multiple sites by different protein kinases and each phosphorylation event selectively modulates the protein's functions. In terms of processing, phosphorylation on Tyr-654 reduces the ability of 4.1 to promote the assembly of the spectrin/actin/4.1 ternary complex.

It localises to the nucleus. The protein resides in the cytoplasm. The protein localises to the cytoskeleton. It is found in the cell cortex. In terms of biological role, protein 4.1 is a major structural element of the erythrocyte membrane skeleton. It plays a key role in regulating membrane physical properties of mechanical stability and deformability by stabilizing spectrin-actin interaction. Recruits DLG1 to membranes. Required for dynein-dynactin complex and NUMA1 recruitment at the mitotic cell cortex during anaphase. The protein is Protein 4.1 of Mus musculus (Mouse).